The chain runs to 509 residues: Zinc finger protein Aiolos (509 aa).

Residues 1-19 are compositionally biased toward polar residues; the sequence is MEDIQTNAELKSTQEQSVP. Residues 1–86 form a disordered region; it reads MEDIQTNAEL…MGNAEEPEIP (86 aa). Phosphoserine is present on residues serine 22 and serine 42. Basic and acidic residues predominate over residues 56–72; the sequence is DSMKVKDEYSERDENVL. Glycyl lysine isopeptide (Lys-Gly) (interchain with G-Cter in SUMO2) cross-links involve residues lysine 61, lysine 73, and lysine 100. 3 C2H2-type zinc fingers span residues 118–140, 146–168, and 174–196; these read MNCD…KRSH, FQCN…IKLH, and FKCH…LRTH. The C2H2-type 4; atypical zinc finger occupies 202–224; it reads YKCEFCGRSYKQRSSLEEHKERC. A Glycyl lysine isopeptide (Lys-Gly) (interchain with G-Cter in SUMO2) cross-link involves residue lysine 245. At threonine 326 the chain carries Phosphothreonine. The interval 364–394 is disordered; that stretch reads IHLPEKSVPSERGLSPNNSGHDSTDTDSNHE. Position 378 is a phosphoserine (serine 378). Positions 385–394 are enriched in basic and acidic residues; that stretch reads DSTDTDSNHE. The C2H2-type 5 zinc-finger motif lies at 452-474; sequence YRCDHCRVLFLDYVMFTIHMGCH. A mediates homodimerization and heterodimerization region spans residues 452 to 504; the sequence is YRCDHCRVLFLDYVMFTIHMGCHGFRDPFECNMCGYRSHDRYEFSSHIARGEH. The C2H2-type 6; atypical zinc-finger motif lies at 480-504; the sequence is FECNMCGYRSHDRYEFSSHIARGEH.

The protein belongs to the Ikaros C2H2-type zinc-finger protein family. Homodimer. Heterodimer with other IKAROS family members. Interacts with IKZF4 and IKZF5. Interacts with IKZF1. Interacts with HRAS. Interacts with FOXP3; this interaction may be required for silencing target genes and regulating the suppressive activity of FOXP3-positive regulatory T-cells (Treg). Interacts with BCL21L isoform Bcl-X(L); this interaction blocks the anti-apoptotic role of BCL21L. Associates with histone deacetylase complexes containing HDAC1, MTA2 and SIN3A. Post-translationally, phosphorylation on tyrosine residues induced by IL2 is required for dissociation from HRAS and nuclear translocation of IKZF3 in T-cells. Phosphorylation on tyrosine residues induced by IL4 is required for dissociation from Bcl-X(L) in T-cells. As to expression, expressed most strongly in peripheral blood leukocytes, the spleen, and the thymus.

The protein localises to the nucleus. The protein resides in the cytoplasm. Transcription factor that plays an important role in the regulation of lymphocyte differentiation. Plays an essential role in regulation of B-cell differentiation, proliferation and maturation to an effector state. Involved in regulating BCL2 expression and controlling apoptosis in T-cells in an IL2-dependent manner. This is Zinc finger protein Aiolos (IKZF3) from Homo sapiens (Human).